A 210-amino-acid polypeptide reads, in one-letter code: MGQVFLLMPVLLVSCFLGQGAAMENQRLFNIAVNRVQHLHLLAQKMFNDFEGTLLPDERRQLNKIFLLDFCNSDSIVSPIDKQETQKSSVLKLLHISFRLIESWEYPSQTLTISNSLMVRNSNQISEKLSDLKVGINLLIKGSQDGVLSLDDNDSQHLPPYGNYYQNLGGDGNVRRNYELLACFKKDMHKVETYLTVAKCRKYLEANCTL.

Residues 1-22 form the signal peptide; that stretch reads MGQVFLLMPVLLVSCFLGQGAA. His38 provides a ligand contact to Zn(2+). Cys71 and Cys183 are disulfide-bonded. Glu192 lines the Zn(2+) pocket. Cys200 and Cys208 are disulfide-bonded.

Belongs to the somatotropin/prolactin family.

The protein localises to the secreted. Growth hormone plays an important role in growth control and is involved in the regulation of several anabolic processes. Implicated as an osmoregulatory substance important for seawater adaptation. In Oncorhynchus mykiss (Rainbow trout), this protein is Somatotropin-2 (gh2).